Consider the following 138-residue polypeptide: Putative phosphatidylinositol 3,4,5-trisphosphate 3-phosphatase TPTE2P1 (138 aa).

A C2 tensin-type domain is found at 1 to 75 (MPAAFPCVFP…FAVEILFGMV (75 aa)).

The chain is Putative phosphatidylinositol 3,4,5-trisphosphate 3-phosphatase TPTE2P1 (TPTE2P1) from Homo sapiens (Human).